We begin with the raw amino-acid sequence, 270 residues long: BPI fold-containing family A member 1 (270 aa).

Positions 1 to 19 are cleaved as a signal peptide; it reads MFLVGSLVVLCGLLAQSTA. The segment at 104–109 is important for surfactant activity and antibacterial properties; that stretch reads LVGGLL. N174 carries an N-linked (GlcNAc...) asparagine glycan. A disulfide bridge connects residues C196 and C238.

Belongs to the BPI/LBP/Plunc superfamily. Plunc family. Monomer. Interacts (via N-terminus) with SCNN1B, a subunit of the heterotrimeric epithelial sodium channel (ENaC); this inhibits proteolytic activation of ENaC. Detected in adult nasal epithelium, heart, lung, spleen, testis and salivary gland, and in embryonic nasal epithelium, lung, salivary gland and thymus.

The protein resides in the secreted. Functionally, lipid-binding protein which shows high specificity for the surfactant phospholipid dipalmitoylphosphatidylcholine (DPPC). Plays a role in the innate immune responses of the upper airways. Reduces the surface tension in secretions from airway epithelia and inhibits the formation of biofilm by pathogenic Gram-negative bacteria, such as P.aeruginosa and K.pneumoniae. Negatively regulates proteolytic cleavage of SCNN1G, an event that is required for activation of the epithelial sodium channel (ENaC), and thereby contributes to airway surface liquid homeostasis and proper clearance of mucus. Plays a role in the airway inflammatory response after exposure to irritants. May attract macrophages and neutrophils. This Rattus norvegicus (Rat) protein is BPI fold-containing family A member 1 (Bpifa1).